The chain runs to 157 residues: Small ribosomal subunit protein uS7 (157 aa).

The protein belongs to the universal ribosomal protein uS7 family. In terms of assembly, part of the 30S ribosomal subunit. Contacts proteins S9 and S11.

Its function is as follows. One of the primary rRNA binding proteins, it binds directly to 16S rRNA where it nucleates assembly of the head domain of the 30S subunit. Is located at the subunit interface close to the decoding center, probably blocks exit of the E-site tRNA. The polypeptide is Small ribosomal subunit protein uS7 (Polaromonas naphthalenivorans (strain CJ2)).